The following is a 533-amino-acid chain: MAPPSHCHTINGGAPRNGAIPEVETTTSTPAASDTALLLDADEFRRLGHQVVDFIADYYAGLGDYPVHPSVTPGFLRRQLPADAPSRPEPEAFAAALRDVRDLILPGVTHWQSPRHFAHFPASSSTVGALGEALAAGINVVPFTWAASPAATELEMVVVDWLGRALHLPESLLFAGGGGGTILGTSCEAVLCALVAARDRKLAEIGARRIGDLVVYCSDQTHFAFRKAARIAGIPREHCREIPTCRDDVFALSPTALHAAMQADVDAGLVPLFLCATVGTTQTTAVDPVRELCAVAARHGGVWVHVDAAYAGSALVCPEFRDVIAGAEAVDSLSMNAHKWLLANNDCCAVWVAAPSALVAALGTEQEYILRDAAAEGHDVVDYKDWGTTLTRRFRALKVWLVLRCYGVEGLRSHVRSHVAMAAAFEAMVRGDARFEVVAPRRFALVCFRLRSPPERLGVGVGVGGEKAANELNRRLLEEVNAASSGPYMSSAMVGGVYMLRCAIGSTLTEERHVREAWKVVQERATSILRKRG.

Positions 1 to 22 (MAPPSHCHTINGGAPRNGAIPE) are disordered. Residues Thr-281 and Asn-336 each contribute to the pyridoxal 5'-phosphate site. Lys-339 carries the N6-(pyridoxal phosphate)lysine modification.

It belongs to the group II decarboxylase family. Pyridoxal 5'-phosphate serves as cofactor.

The enzyme catalyses L-tyrosine + H(+) = tyramine + CO2. Its function is as follows. Catalyzes the decarboxylation of L-tyrosine to tyramine, which can be converted to the hydroxycinnamic acid amides feruloyltyramine and 4-coumaroyltyramine. Possesses low tryptophan decarboxylase activity. This is Tyrosine decarboxylase from Oryza sativa subsp. japonica (Rice).